The following is a 151-amino-acid chain: Ribonuclease H (151 aa).

The 146-residue stretch at 1–146 folds into the RNase H type-1 domain; that stretch reads MSDLFAYTDG…ADELARAGMA (146 aa). Residues Asp9, Glu52, Asp74, and Asp138 each contribute to the Mg(2+) site.

The protein belongs to the RNase H family. Monomer. Mg(2+) serves as cofactor.

It is found in the cytoplasm. The enzyme catalyses Endonucleolytic cleavage to 5'-phosphomonoester.. Endonuclease that specifically degrades the RNA of RNA-DNA hybrids. The chain is Ribonuclease H from Cereibacter sphaeroides (strain ATCC 17025 / ATH 2.4.3) (Rhodobacter sphaeroides).